Here is a 222-residue protein sequence, read N- to C-terminus: MSHLVKMENGQSQTIQEMLGCIERYNPDHLKTLEAYVQDQAKNNTYDLEANLAVLKLYQFNPHMLNIDITYTILLKSLTSLPHTDFVMAKCLLLPQQMKDENVQTIIDLADILERADFTLFWQRAEVNRNMFRHIAGFHDSIRKFVSHVVSTTFQTIRKDLLKELLGGIEDSTLESWIKRNGWKHQGQGLVVVAMQDDKIKTKNITEKIEFDNVGGLMAQCL.

Residues 46 to 208 form the PCI domain; that stretch reads YDLEANLAVL…KIKTKNITEK (163 aa).

Belongs to the eIF-3 subunit K family. Component of the eukaryotic translation initiation factor 3 (eIF-3) complex. The eIF-3 complex interacts with pix.

The protein resides in the cytoplasm. In terms of biological role, component of the eukaryotic translation initiation factor 3 (eIF-3) complex, which is involved in protein synthesis of a specialized repertoire of mRNAs and, together with other initiation factors, stimulates binding of mRNA and methionyl-tRNAi to the 40S ribosome. The eIF-3 complex specifically targets and initiates translation of a subset of mRNAs involved in cell proliferation. This Drosophila erecta (Fruit fly) protein is Eukaryotic translation initiation factor 3 subunit K.